A 306-amino-acid chain; its full sequence is Pantothenate kinase (306 aa).

Position 91 to 98 (91 to 98 (GSVAVGKS)) interacts with ATP.

The protein belongs to the prokaryotic pantothenate kinase family.

The protein localises to the cytoplasm. It carries out the reaction (R)-pantothenate + ATP = (R)-4'-phosphopantothenate + ADP + H(+). It functions in the pathway cofactor biosynthesis; coenzyme A biosynthesis; CoA from (R)-pantothenate: step 1/5. In Streptococcus pyogenes serotype M1, this protein is Pantothenate kinase (coaA).